The sequence spans 282 residues: Large ribosomal subunit protein uL2 (282 aa).

2 disordered regions span residues 31-56 and 226-282; these read EKSL…RHRG and SVMN…GSKM. The segment covering 35–44 has biased composition (polar residues); it reads LDSQSHSAGR. Basic residues predominate over residues 257 to 266; that stretch reads TVGKKTRSKK.

This sequence belongs to the universal ribosomal protein uL2 family. As to quaternary structure, part of the 50S ribosomal subunit. Forms a bridge to the 30S subunit in the 70S ribosome.

One of the primary rRNA binding proteins. Required for association of the 30S and 50S subunits to form the 70S ribosome, for tRNA binding and peptide bond formation. It has been suggested to have peptidyltransferase activity; this is somewhat controversial. Makes several contacts with the 16S rRNA in the 70S ribosome. This Levilactobacillus brevis (strain ATCC 367 / BCRC 12310 / CIP 105137 / JCM 1170 / LMG 11437 / NCIMB 947 / NCTC 947) (Lactobacillus brevis) protein is Large ribosomal subunit protein uL2.